The following is a 492-amino-acid chain: Protein PAIR1 (492 aa).

Residues Val-166–Asp-186 are a coiled coil. Positions Lys-479–Arg-483 match the Nuclear localization signal motif.

As to quaternary structure, interacts with CRC1. In terms of tissue distribution, expressed in reproductive organs, but not in vegetative organs.

The protein localises to the nucleus. Involved in spore formation. Plays an essential role in the establishment of homologous chromosome pairing in early meiosis. This Oryza sativa subsp. japonica (Rice) protein is Protein PAIR1 (PAIR1).